Reading from the N-terminus, the 315-residue chain is Olfactory receptor 4K3 (315 aa).

Residues 1–25 lie on the Extracellular side of the membrane; it reads MAWSNQSAVTEFILRGLSSSLELQI. A glycan (N-linked (GlcNAc...) asparagine) is linked at asparagine 5. A helical membrane pass occupies residues 26-49; it reads FYFLFFSIVYAATVLGNLLIVVTI. Residues 50-57 are Cytoplasmic-facing; it reads ASEPHLHS. The helical transmembrane segment at 58–79 threads the bilayer; sequence PMYFLLGNLSFIDMSLASFATP. At 80 to 100 the chain is on the extracellular side; it reads KMIADFLREHKAISFEGCMTQ. Cysteines 97 and 189 form a disulfide. Residues 101 to 120 traverse the membrane as a helical segment; it reads MFFLHLLGGAEIVLLISMSF. Residues 121 to 139 lie on the Cytoplasmic side of the membrane; it reads DRYVAICKPLHYLTIMSRR. Residues 140 to 158 form a helical membrane-spanning segment; the sequence is MCVGLVILSWIVGIFHALS. The Extracellular segment spans residues 159–195; sequence QLAFTVNLPFCGPNEVDSFFCDLPLVIKLACVDTYIL. A helical membrane pass occupies residues 196 to 219; it reads GVFMISTSGMIALVCFILLVISYT. Over 220–235 the chain is Cytoplasmic; the sequence is IILVTVRQRSSGGSSK. A helical transmembrane segment spans residues 236–258; it reads ALSTCSAHFTVVTLFFGPCTFIY. At 259-269 the chain is on the extracellular side; the sequence is VWPFTNFPIDK. Residues 270–289 traverse the membrane as a helical segment; sequence VLSVFYTIYTPLLNPVIYTV. Residues 290 to 315 are Cytoplasmic-facing; that stretch reads RNKDVKYSMRKLSSHIFKSRKTDHTP.

The protein belongs to the G-protein coupled receptor 1 family.

The protein resides in the cell membrane. Its function is as follows. Odorant receptor. The chain is Olfactory receptor 4K3 (OR4K3) from Homo sapiens (Human).